The chain runs to 207 residues: Thiamine-phosphate synthase (207 aa).

Residues 37–41 (QLREK) and Asn-69 each bind 4-amino-2-methyl-5-(diphosphooxymethyl)pyrimidine. Residues Asp-70 and Asp-89 each coordinate Mg(2+). 4-amino-2-methyl-5-(diphosphooxymethyl)pyrimidine is bound at residue Ser-108. 134 to 136 (TGS) provides a ligand contact to 2-[(2R,5Z)-2-carboxy-4-methylthiazol-5(2H)-ylidene]ethyl phosphate. Residue Lys-137 coordinates 4-amino-2-methyl-5-(diphosphooxymethyl)pyrimidine. Residues Gly-165 and 185–186 (IS) each bind 2-[(2R,5Z)-2-carboxy-4-methylthiazol-5(2H)-ylidene]ethyl phosphate.

The protein belongs to the thiamine-phosphate synthase family. It depends on Mg(2+) as a cofactor.

The enzyme catalyses 2-[(2R,5Z)-2-carboxy-4-methylthiazol-5(2H)-ylidene]ethyl phosphate + 4-amino-2-methyl-5-(diphosphooxymethyl)pyrimidine + 2 H(+) = thiamine phosphate + CO2 + diphosphate. The catalysed reaction is 2-(2-carboxy-4-methylthiazol-5-yl)ethyl phosphate + 4-amino-2-methyl-5-(diphosphooxymethyl)pyrimidine + 2 H(+) = thiamine phosphate + CO2 + diphosphate. It carries out the reaction 4-methyl-5-(2-phosphooxyethyl)-thiazole + 4-amino-2-methyl-5-(diphosphooxymethyl)pyrimidine + H(+) = thiamine phosphate + diphosphate. It functions in the pathway cofactor biosynthesis; thiamine diphosphate biosynthesis; thiamine phosphate from 4-amino-2-methyl-5-diphosphomethylpyrimidine and 4-methyl-5-(2-phosphoethyl)-thiazole: step 1/1. Functionally, condenses 4-methyl-5-(beta-hydroxyethyl)thiazole monophosphate (THZ-P) and 2-methyl-4-amino-5-hydroxymethyl pyrimidine pyrophosphate (HMP-PP) to form thiamine monophosphate (TMP). The polypeptide is Thiamine-phosphate synthase (Desulfitobacterium hafniense (strain DSM 10664 / DCB-2)).